Here is a 712-residue protein sequence, read N- to C-terminus: Translation initiation factor eIF2B subunit epsilon (712 aa).

Positions 1-20 are disordered; the sequence is MAGKKGQKKSGLGNHGKNSD. 6 positions are modified to phosphoserine: Ser478, Ser481, Ser507, Ser525, Ser538, and Ser707. The region spanning 539-710 is the W2 domain; sequence EFEDEDFEKE…QNADEESSSE (172 aa).

The protein belongs to the eIF-2B gamma/epsilon subunits family. In terms of assembly, component of the translation initiation factor 2B (eIF2B) complex which is a heterodecamer of two sets of five different subunits: alpha, beta, gamma, delta and epsilon. Subunits alpha, beta and delta comprise a regulatory subcomplex and subunits epsilon and gamma comprise a catalytic subcomplex. Within the complex, the hexameric regulatory complex resides at the center, with the two heterodimeric catalytic subcomplexes bound on opposite sides.

Its subcellular location is the cytoplasm. It is found in the cytosol. In terms of biological role, acts as a catalytic component of the translation initiation factor 2B (eIF2B) complex, which catalyzes the exchange of GDP for GTP on eukaryotic initiation factor 2 (eIF2) and is regulated by phosphorylated eIF2. Its guanine nucleotide exchange factor activity is repressed when bound to eIF2 complex phosphorylated on the alpha subunit, thereby limiting the amount of methionyl-initiator methionine tRNA available to the ribosome and consequently global translation is repressed. It activates the synthesis of GCN4 in yeast under amino acid starvation conditions by suppressing the inhibitory effects of multiple AUG codons present in the leader of GCN4 mRNA. It may promote either repression or activation of GCN4 expression depending on amino acid availability. GCD6 and GCD7 repress GCN4 expression at the translational level by ensuring that ribosomes which have translated UORF1 will reinitiate at UORF2, -3, or -4 and thus fail to reach the GCN4 start site. The protein is Translation initiation factor eIF2B subunit epsilon (GCD6) of Saccharomyces cerevisiae (strain ATCC 204508 / S288c) (Baker's yeast).